Consider the following 310-residue polypeptide: tRNA-cytidine(32) 2-sulfurtransferase (310 aa).

Positions 47 to 52 (SGGKDS) match the PP-loop motif motif. [4Fe-4S] cluster-binding residues include Cys-122, Cys-125, and Cys-213.

The protein belongs to the TtcA family. In terms of assembly, homodimer. The cofactor is Mg(2+). It depends on [4Fe-4S] cluster as a cofactor.

Its subcellular location is the cytoplasm. The catalysed reaction is cytidine(32) in tRNA + S-sulfanyl-L-cysteinyl-[cysteine desulfurase] + AH2 + ATP = 2-thiocytidine(32) in tRNA + L-cysteinyl-[cysteine desulfurase] + A + AMP + diphosphate + H(+). Its pathway is tRNA modification. Functionally, catalyzes the ATP-dependent 2-thiolation of cytidine in position 32 of tRNA, to form 2-thiocytidine (s(2)C32). The sulfur atoms are provided by the cysteine/cysteine desulfurase (IscS) system. The chain is tRNA-cytidine(32) 2-sulfurtransferase from Haemophilus influenzae (strain 86-028NP).